The following is a 196-amino-acid chain: GTP cyclohydrolase 1 (196 aa).

Zn(2+) is bound by residues Cys-86, His-89, and Cys-158.

Belongs to the GTP cyclohydrolase I family. In terms of assembly, toroid-shaped homodecamer, composed of two pentamers of five dimers.

The catalysed reaction is GTP + H2O = 7,8-dihydroneopterin 3'-triphosphate + formate + H(+). Its pathway is cofactor biosynthesis; 7,8-dihydroneopterin triphosphate biosynthesis; 7,8-dihydroneopterin triphosphate from GTP: step 1/1. The protein is GTP cyclohydrolase 1 of Clostridium botulinum (strain Langeland / NCTC 10281 / Type F).